The primary structure comprises 344 residues: Endoplasmic reticulum junction formation protein lunapark-1 (344 aa).

The Cytoplasmic portion of the chain corresponds to M1–T39. A helical transmembrane segment spans residues L40–L60. At R61–T68 the chain is on the lumenal side. The helical transmembrane segment at Y69 to I89 threads the bilayer. Residues N90–S344 are Cytoplasmic-facing. Residues D116–A140 are a coiled coil. 2 disordered regions span residues E136–K155 and Q171–D192. A compositionally biased stretch (polar residues) spans A140 to K155. The C4-type; plays a role in ER morphology zinc finger occupies C239–C264. The disordered stretch occupies residues P275–S344. The span at P312–G326 shows a compositional bias: polar residues. Basic and acidic residues predominate over residues S327–S344.

The protein belongs to the lunapark family.

The protein localises to the endoplasmic reticulum membrane. In terms of biological role, plays a role in tubular endoplasmic reticulum network formation and maintenance. May be involved in central nervous system development. Has a presynaptic role in neurotransmission. Likely to operate in synaptogenesis by regulating vesicular transport or localization. Required for correct localization of rab-3 and snb-1. The polypeptide is Endoplasmic reticulum junction formation protein lunapark-1 (Caenorhabditis briggsae).